The following is a 454-amino-acid chain: Guanine deaminase (454 aa).

The Zn(2+) site is built by H82 and H84. Residues H84–Q87, R213–F214, H240–E243, and D330 contribute to the substrate site. H240 and D330 together coordinate Zn(2+). S453 bears the Phosphoserine mark.

Belongs to the metallo-dependent hydrolases superfamily. ATZ/TRZ family. Homodimer. It depends on Zn(2+) as a cofactor.

The catalysed reaction is guanine + H2O + H(+) = xanthine + NH4(+). Its pathway is purine metabolism; guanine degradation; xanthine from guanine: step 1/1. Its function is as follows. Catalyzes the hydrolytic deamination of guanine, producing xanthine and ammonia. The polypeptide is Guanine deaminase (Homo sapiens (Human)).